A 331-amino-acid polypeptide reads, in one-letter code: Olfactory receptor 6S1 (331 aa).

Residues Met-1–Leu-29 are Extracellular-facing. Asn-6 carries an N-linked (GlcNAc...) asparagine glycan. Residues Phe-30–Val-50 traverse the membrane as a helical segment. At Val-51–Thr-59 the chain is on the cytoplasmic side. Residues Pro-60–Ile-80 form a helical membrane-spanning segment. At Pro-81–Cys-99 the chain is on the extracellular side. A disulfide bridge links Cys-99 with Cys-182. A helical membrane pass occupies residues Ile-100–Met-120. Over Ser-121–Ala-147 the chain is Cytoplasmic. The chain crosses the membrane as a helical span at residues Leu-148 to Leu-168. At Pro-169 to Ser-207 the chain is on the extracellular side. Residues Leu-208–Val-228 form a helical membrane-spanning segment. Residues Leu-229–Ser-242 are Cytoplasmic-facing. Residues Thr-243–Val-263 traverse the membrane as a helical segment. Over Arg-264–Asn-274 the chain is Extracellular. The helical transmembrane segment at Trp-275–Leu-295 threads the bilayer. Over Arg-296 to Lys-331 the chain is Cytoplasmic.

The protein belongs to the G-protein coupled receptor 1 family.

The protein localises to the cell membrane. Odorant receptor. This Homo sapiens (Human) protein is Olfactory receptor 6S1 (OR6S1).